A 112-amino-acid polypeptide reads, in one-letter code: VDVPADGAKIDFIAGGEKNLTVVFNHSTHKDVKCDDCHHDPGDKQYAGCTTDGCHNILDKADKSVNSWYKVVHDAKGGAKPTCISCHKDKAGDDKELKKKLTGCKGSACHPS.

16 residues coordinate heme c: His26, His29, Cys34, Cys37, His38, His39, Cys49, Cys54, His55, His73, Cys83, Cys86, His87, Cys104, Cys109, and His110.

It depends on heme as a cofactor.

Functionally, participates in sulfate respiration coupled with phosphorylation by transferring electrons from the enzyme dehydrogenase to ferredoxin. This is Cytochrome c3 from Megalodesulfovibrio gigas (strain ATCC 19364 / DSM 1382 / NCIMB 9332 / VKM B-1759) (Desulfovibrio gigas).